Consider the following 356-residue polypeptide: 3-isopropylmalate dehydrogenase (356 aa).

73-86 (GTQYDGLPREKRPE) provides a ligand contact to NAD(+). Positions 93, 103, 131, and 220 each coordinate substrate. Mg(2+)-binding residues include Asp220, Asp244, and Asp248. 278–290 (GSAPDIAGKGIAN) contributes to the NAD(+) binding site.

It belongs to the isocitrate and isopropylmalate dehydrogenases family. LeuB type 1 subfamily. Homodimer. It depends on Mg(2+) as a cofactor. Mn(2+) is required as a cofactor.

It localises to the cytoplasm. The enzyme catalyses (2R,3S)-3-isopropylmalate + NAD(+) = 4-methyl-2-oxopentanoate + CO2 + NADH. It participates in amino-acid biosynthesis; L-leucine biosynthesis; L-leucine from 3-methyl-2-oxobutanoate: step 3/4. Catalyzes the oxidation of 3-carboxy-2-hydroxy-4-methylpentanoate (3-isopropylmalate) to 3-carboxy-4-methyl-2-oxopentanoate. The product decarboxylates to 4-methyl-2 oxopentanoate. In Nitrosomonas europaea (strain ATCC 19718 / CIP 103999 / KCTC 2705 / NBRC 14298), this protein is 3-isopropylmalate dehydrogenase.